Consider the following 567-residue polypeptide: Glucose-6-phosphate isomerase, cytosolic A (567 aa).

D-glucose 6-phosphate contacts are provided by residues 156 to 157 (GS), 212 to 217 (SKTFTT), Q356, E360, H391, and K516. The Proton donor role is filled by E360. Catalysis depends on residues H391 and K516.

This sequence belongs to the GPI family. Homodimer.

The protein resides in the cytoplasm. It carries out the reaction alpha-D-glucose 6-phosphate = beta-D-fructose 6-phosphate. Its pathway is carbohydrate degradation; glycolysis; D-glyceraldehyde 3-phosphate and glycerone phosphate from D-glucose: step 2/4. Functionally, catalyzes the conversion of glucose-6-phosphate to fructose-6-phosphate, the second step in glycolysis, and the reverse reaction during gluconeogenesis. In Oryza sativa subsp. japonica (Rice), this protein is Glucose-6-phosphate isomerase, cytosolic A.